The chain runs to 159 residues: Ribosomal RNA large subunit methyltransferase H (159 aa).

Residues Leu76, Gly108, and 127–132 (FGLLTL) each bind S-adenosyl-L-methionine.

The protein belongs to the RNA methyltransferase RlmH family. In terms of assembly, homodimer.

It is found in the cytoplasm. The catalysed reaction is pseudouridine(1915) in 23S rRNA + S-adenosyl-L-methionine = N(3)-methylpseudouridine(1915) in 23S rRNA + S-adenosyl-L-homocysteine + H(+). Specifically methylates the pseudouridine at position 1915 (m3Psi1915) in 23S rRNA. This chain is Ribosomal RNA large subunit methyltransferase H, found in Streptococcus equi subsp. zooepidemicus (strain H70).